Consider the following 297-residue polypeptide: Transmembrane protein 169 (297 aa).

The tract at residues 1–85 (MEEPTAVEGQ…KEEEGDDFLD (85 aa)) is disordered. Topologically, residues 1 to 159 (MEEPTAVEGQ…CQMGADRGPH (159 aa)) are extracellular. A compositionally biased stretch (acidic residues) spans 61 to 85 (KTDEEPGESEGGDQPKEEEGDDFLD). A helical transmembrane segment spans residues 160–180 (VVLWTLICLPVVFILSFVVSF). The Cytoplasmic segment spans residues 181–210 (YYGTITWYNIFLVYNEERTFWHKISYCPCL). A helical membrane pass occupies residues 211 to 231 (VLFYPVLIMAMASSLGLYAAV). Topologically, residues 232–297 (VQLSWSWEAW…PIQEVETSTV (66 aa)) are extracellular.

It is found in the membrane. This is Transmembrane protein 169 (TMEM169) from Homo sapiens (Human).